Consider the following 473-residue polypeptide: Microtubule-binding protein TANGLED (473 aa).

Residues 1-132 form a required for binding to TAN and location to the cortical division sites (CDS) during cytokinesis region; that stretch reads MVARTPQKQR…VTRDIVDAIA (132 aa). Disordered regions lie at residues 131–218 and 290–354; these read IAPK…ENSF and ASKF…LSTA. Composition is skewed to polar residues over residues 205-216 and 307-329; these read ISPQVKGNNGEN and PTRNGSNSVRKSPRGSRSPTRTV.

Interacts with POK1. In terms of tissue distribution, strongly expressed in flower buds and root tips.

Its subcellular location is the nucleus. It is found in the nucleolus. It localises to the cytoplasm. The protein resides in the cytoskeleton. The protein localises to the phragmoplast. Its function is as follows. Is required for spatial control cell division during plant development. Through an association with microtubules, acts both for the positioning of cytoskeletal arrays that establish planes of cell division during prophase and for spatial guidance of expanding phragmoplasts toward preestablished cortical division sites (CDS) during cytokinesis. In Arabidopsis thaliana (Mouse-ear cress), this protein is Microtubule-binding protein TANGLED (TAN).